We begin with the raw amino-acid sequence, 352 residues long: N-terminal EF-hand calcium-binding protein 1 (352 aa).

A Phosphoserine modification is found at Ser4. EF-hand domains lie at 26 to 61 and 60 to 95; these read KGMS…GVLS and LSGE…HLGE. Ca(2+) is bound by residues Asp39, Asn41, Asp43, Lys45, and Glu50. The stretch at 135 to 163 forms a coiled coil; sequence LLKETLNQLQSLQNSLECAMETTEEQTRQ. The interval 180-202 is disordered; the sequence is GKRSSRRVQRHNSFSPNSPQFNV. Residues 190-202 show a composition bias toward polar residues; that stretch reads HNSFSPNSPQFNV. A phosphoserine mark is found at Ser192 and Ser197. Residues 209–275 are a coiled coil; that stretch reads EEDNQWMTQI…EEFQLALKHY (67 aa). The 89-residue stretch at 252–340 folds into the ABM domain; that stretch reads MLVQRQMSVI…LETPELTSTM (89 aa).

Interacts with STX1. May interact with CPNE6.

The protein resides in the cytoplasm. The sequence is that of N-terminal EF-hand calcium-binding protein 1 (NECAB1) from Pongo abelii (Sumatran orangutan).